Consider the following 493-residue polypeptide: High affinity nitrate transporter 2.7 (493 aa).

Residues 1–19 show a composition bias toward polar residues; that stretch reads MEPSQRNTKPPSFSDSTIP. A disordered region spans residues 1-20; that stretch reads MEPSQRNTKPPSFSDSTIPV. The next 12 membrane-spanning stretches (helical) occupy residues 46-66, 70-90, 113-133, 136-156, 174-194, 202-222, 257-277, 299-319, 341-361, 368-388, 400-420, and 431-451; these read WLSL…VPVI, LNLS…GSIF, FLTA…SFIL, FFVG…SSMF, VGAG…AEFL, VSFV…LLYG, FVEI…ALLY, FGVN…SNIA, LWGL…LGRV, ILVM…VFGV, VAGI…FLLF, and ISLM…IYFP.

The protein belongs to the major facilitator superfamily. Nitrate/nitrite porter (TC 2.A.1.8) family. Expressed in seeds, leaves and shoots. Lower expression in roots.

The protein localises to the vacuole membrane. Functionally, involved in high-affinity nitrate transport. Controls nitrate content in seeds. The protein is High affinity nitrate transporter 2.7 (NRT2.7) of Arabidopsis thaliana (Mouse-ear cress).